We begin with the raw amino-acid sequence, 961 residues long: Rho guanine nucleotide exchange factor 2 (961 aa).

A Phorbol-ester/DAG-type zinc finger spans residues 12 to 59 (GHLFTTISVSGMTMCYACNKSITAKEALICPTCNVTIHNRCKDTLANC). Residues S82, S95, S102, S106, S110, S124, S136, S145, S147, and S150 each carry the phosphoserine modification. The interval 104–134 (RQSLLGSRRGRSPLSLAKSVSTTNIAGHFND) is interaction with DYNLT1. Positions 209–406 (KQQDVIYELI…KELLSNVDQD (198 aa)) constitute a DH domain. K327 carries the post-translational modification N6-acetyllysine. The PH domain maps to 446–545 (KLIHDGCLLW…WIRVIQQSVR (100 aa)). Residues 561-588 (EAYLRRIKMELQQKDRALVELLQEKVGL) are a coiled coil. Phosphoserine occurs at positions 619 and 622. T653 is modified (phosphothreonine; by MAPK1 or MAPK3). The segment at 659–679 (LPVETDSGGNTSPGVTANGEA) is disordered. Phosphoserine occurs at positions 665, 670, 685, and 756. The segment covering 742-761 (PEGPERREKLTRANSRDGEA) has biased composition (basic and acidic residues). Positions 742 to 770 (PEGPERREKLTRANSRDGEAGRAGAAPVA) are disordered. Residues 772–841 (EKQATELALL…RQLAALGHTE (70 aa)) adopt a coiled-coil conformation. At S860 the chain carries Phosphoserine; by PAK1 and AURKA. A disordered region spans residues 867 to 961 (LYLSFTPPQP…RDGEPVASES (95 aa)). A Phosphotyrosine modification is found at Y868. Position 870 is a phosphoserine; by PAK4 (S870). Over residues 894–913 (RPFEDRERQELGSPDERLQD) the composition is skewed to basic and acidic residues. S906, S914, and S915 each carry phosphoserine. Residues 915 to 925 (SDPDTGSEEEG) are compositionally biased toward acidic residues. Phosphothreonine is present on T919. S921, S927, S928, and S931 each carry phosphoserine. A Phosphoserine; by CDK1 modification is found at S935.

In terms of assembly, found in a complex composed at least of ARHGEF2, NOD2 and RIPK2. Interacts with RIPK2; the interaction mediates tyrosine phosphorylation of RIPK2 by Src kinase CSK. Interacts with RIPK1 and RIPK3. Interacts with YWHAZ/14-3-3 zeta; when phosphorylated at Ser-860. Interacts with the kinases PAK4, AURKA and MAPK1. Interacts with RHOA and RAC1. Interacts with NOD1. Interacts (via the N- terminal zinc finger) with CAPN6 (via domain II). Interacts with DYNLT1. Post-translationally, phosphorylation of Ser-860 by PAK1 induces binding to protein YWHAZ, promoting its relocation to microtubules and the inhibition of its activity. Phosphorylated by AURKA and CDK1 during mitosis, which negatively regulates its activity. Phosphorylation by MAPK1 or MAPK3 increases nucleotide exchange activity. Phosphorylation by PAK4 releases GEF-H1 from the microtubules. Phosphorylated on serine, threonine and tyrosine residues in a RIPK2-dependent manner.

It is found in the cytoplasm. The protein resides in the cytoskeleton. The protein localises to the cell junction. Its subcellular location is the tight junction. It localises to the golgi apparatus. It is found in the spindle. The protein resides in the cytoplasmic vesicle. Functionally, activates Rho-GTPases by promoting the exchange of GDP for GTP. May be involved in epithelial barrier permeability, cell motility and polarization, dendritic spine morphology, antigen presentation, leukemic cell differentiation, cell cycle regulation, innate immune response, and cancer. Binds Rac-GTPases, but does not seem to promote nucleotide exchange activity toward Rac-GTPases. May stimulate instead the cortical activity of Rac. Inactive toward CDC42, TC10, or Ras-GTPases. Forms an intracellular sensing system along with NOD1 for the detection of microbial effectors during cell invasion by pathogens. Involved in innate immune signaling transduction pathway promoting cytokine IL6/interleukin-6 and TNF-alpha secretion in macrophage upon stimulation by bacterial peptidoglycans; acts as a signaling intermediate between NOD2 receptor and RIPK2 kinase. Contributes to the tyrosine phosphorylation of RIPK2 through Src tyrosine kinase leading to NF-kappaB activation by NOD2. Overexpression activates Rho-, but not Rac-GTPases, and increases paracellular permeability. Involved in neuronal progenitor cell division and differentiation. Involved in the migration of precerebellar neurons. The polypeptide is Rho guanine nucleotide exchange factor 2 (ARHGEF2) (Sus scrofa (Pig)).